Consider the following 394-residue polypeptide: Guanine nucleotide-binding protein G(s) subunit alpha (394 aa).

The interval 1 to 25 (MGCLGDSKTEDQRNEEKAQREANKK) is disordered. Glycine 2 is lipidated: N-palmitoyl glycine. Cysteine 3 carries S-palmitoyl cysteine lipidation. Residues 7–25 (SKTEDQRNEEKAQREANKK) are compositionally biased toward basic and acidic residues. Positions 39–394 (ATHRLLLLGA…RMHLRQYELL (356 aa)) constitute a G-alpha domain. Residues 42–55 (RLLLLGAGESGKST) are G1 motif. 47-55 (GAGESGKST) lines the GTP pocket. Residue serine 54 participates in Mg(2+) binding. The segment at 68-90 (FNGEGGEEDPQAARSNSDGEKAT) is disordered. The G2 motif stretch occupies residues 196–204 (DLLRCRVLT). Residues 197 to 204 (LLRCRVLT), 223 to 227 (DVGGQ), 292 to 295 (NKQD), and alanine 366 contribute to the GTP site. Residue threonine 204 participates in Mg(2+) binding. Positions 219 to 228 (FHMFDVGGQR) are G3 motif. Positions 288 to 295 (ILFLNKQD) are G4 motif. The G5 motif stretch occupies residues 364–369 (TCAVDT).

This sequence belongs to the G-alpha family. G(s) subfamily. In terms of assembly, heterotrimeric G proteins are composed of 3 units; alpha, beta and gamma. The alpha chain contains the guanine nucleotide binding site. Interacts with CRY1; the interaction may block GPCR-mediated regulation of cAMP concentrations. Interacts with ADCY6 and stimulates its adenylyl cyclase activity. Interacts with ADCY2 and ADCY5. Stimulates the ADCY5 adenylyl cyclase activity. Interaction with SASH1.

The protein localises to the cell membrane. Functionally, guanine nucleotide-binding proteins (G proteins) function as transducers in numerous signaling pathways controlled by G protein-coupled receptors (GPCRs). Signaling involves the activation of adenylyl cyclases, resulting in increased levels of the signaling molecule cAMP. GNAS functions downstream of several GPCRs, including beta-adrenergic receptors. Stimulates the Ras signaling pathway via RAPGEF2. This Cricetulus longicaudatus (Long-tailed dwarf hamster) protein is Guanine nucleotide-binding protein G(s) subunit alpha (GNAS).